The following is a 348-amino-acid chain: Mannonate dehydratase (348 aa).

It belongs to the mannonate dehydratase family. Fe(2+) is required as a cofactor. It depends on Mn(2+) as a cofactor.

It carries out the reaction D-mannonate = 2-dehydro-3-deoxy-D-gluconate + H2O. It functions in the pathway carbohydrate metabolism; pentose and glucuronate interconversion. In terms of biological role, catalyzes the dehydration of D-mannonate. This is Mannonate dehydratase from Streptococcus agalactiae serotype V (strain ATCC BAA-611 / 2603 V/R).